The primary structure comprises 682 residues: Homeobox-leucine zipper protein HDG7 (682 aa).

Residues 33 to 65 (LSDDSFDAMSGDEDKQEQRPKKKKRKTKYHRHT) are disordered. Residues 52–65 (PKKKKRKTKYHRHT) are compositionally biased toward basic residues. A DNA-binding region (homeobox) is located at residues 57–116 (RKTKYHRHTSYQIQELESFFKECPHPNEKQRLELGKKLTLESKQIKFWFQNRRTQMKTQL). Residues 105 to 186 (FQNRRTQMKT…LDRICALANR (82 aa)) are a coiled coil. An START domain is found at 214–429 (SGGTSLMFMD…LQRQCESFTM (216 aa)).

It belongs to the HD-ZIP homeobox family. Class IV subfamily. Interacts with AIL7/PLT7. As to expression, expressed in cells around the base of leaf primordia, in the outermost 2 to 3 cell layers along the boundary between two leaf primordia. Expressed in lateral root primordia and tips, and in the epidermal boundaries of two cotyledons at heart-stage embryo.

The protein resides in the nucleus. Its function is as follows. Probable transcription factor that binds to the DNA sequence 5'-GCATTAAATGC-3'. Seems to promote cell differentiation. The sequence is that of Homeobox-leucine zipper protein HDG7 from Arabidopsis thaliana (Mouse-ear cress).